We begin with the raw amino-acid sequence, 198 residues long: NAD(P)H dehydrogenase (quinone) (198 aa).

The Flavodoxin-like domain occupies 4-189 (VLVLYYSMYG…SIARYQGEYV (186 aa)). FMN contacts are provided by residues 10 to 15 (SMYGHI) and 78 to 80 (TRF). An NAD(+)-binding site is contributed by Tyr-12. Substrate is bound at residue Trp-98. Residues 113–118 (STGTGG) and His-133 each bind FMN.

The protein belongs to the WrbA family. Requires FMN as cofactor.

It catalyses the reaction a quinone + NADH + H(+) = a quinol + NAD(+). It carries out the reaction a quinone + NADPH + H(+) = a quinol + NADP(+). In Escherichia coli O157:H7, this protein is NAD(P)H dehydrogenase (quinone).